The primary structure comprises 192 residues: Elongation factor P (192 aa).

Belongs to the elongation factor P family.

It is found in the cytoplasm. The protein operates within protein biosynthesis; polypeptide chain elongation. Its function is as follows. Involved in peptide bond synthesis. Stimulates efficient translation and peptide-bond synthesis on native or reconstituted 70S ribosomes in vitro. Probably functions indirectly by altering the affinity of the ribosome for aminoacyl-tRNA, thus increasing their reactivity as acceptors for peptidyl transferase. This Borrelia turicatae (strain 91E135) protein is Elongation factor P.